A 375-amino-acid polypeptide reads, in one-letter code: Glycogen synthase kinase-3 homolog YGK3 (375 aa).

Residues 41–329 enclose the Protein kinase domain; sequence VREGKRIGHG…ARQLMAHEFF (289 aa). ATP is bound by residues 47–55 and Lys74; that span reads IGHGSFGTV. Asp173 functions as the Proton acceptor in the catalytic mechanism. Residue Ser211 is modified to Phosphoserine.

The protein belongs to the protein kinase superfamily. Ser/Thr protein kinase family.

It catalyses the reaction L-seryl-[protein] + ATP = O-phospho-L-seryl-[protein] + ADP + H(+). The catalysed reaction is L-threonyl-[protein] + ATP = O-phospho-L-threonyl-[protein] + ADP + H(+). Functionally, required for heat stress-instigated phosphorylation of BCY1 which is involved in cell wall integrity signaling. Regulates activity of MSN2, a transcription factor that binds to the stress-response element (STRE). Probably promotes formation of a complex between MSN2 and DNA. Regulates the stability of ROG1. The sequence is that of Glycogen synthase kinase-3 homolog YGK3 (YGK3) from Saccharomyces cerevisiae (strain ATCC 204508 / S288c) (Baker's yeast).